The primary structure comprises 436 residues: Enolase (436 aa).

(2R)-2-phosphoglycerate is bound at residue glutamine 167. Catalysis depends on glutamate 209, which acts as the Proton donor. 3 residues coordinate Mg(2+): aspartate 246, glutamate 291, and aspartate 318. The (2R)-2-phosphoglycerate site is built by lysine 343, arginine 372, serine 373, and lysine 394. The active-site Proton acceptor is the lysine 343.

It belongs to the enolase family. As to quaternary structure, component of the RNA degradosome, a multiprotein complex involved in RNA processing and mRNA degradation. Requires Mg(2+) as cofactor.

Its subcellular location is the cytoplasm. The protein resides in the secreted. The protein localises to the cell surface. It carries out the reaction (2R)-2-phosphoglycerate = phosphoenolpyruvate + H2O. Its pathway is carbohydrate degradation; glycolysis; pyruvate from D-glyceraldehyde 3-phosphate: step 4/5. Catalyzes the reversible conversion of 2-phosphoglycerate (2-PG) into phosphoenolpyruvate (PEP). It is essential for the degradation of carbohydrates via glycolysis. This chain is Enolase, found in Haemophilus influenzae (strain ATCC 51907 / DSM 11121 / KW20 / Rd).